The primary structure comprises 4690 residues: MDQVAVTRFPALHCFEGPKQRQSVGSNARHHTIRGNIDTQHQSQDETLRRFANFVSSLVGDDEISFDFIISPSNGGSDIAESGTAQAKKDPTQATSDYNGITLLRSTPFVESGHSEFGIIIRRQLRNNDSSLFTLEKSFVVAVDKSSYSVRICRDLVPRPLLQSISTSLCSYMGWTNPSQHSEEESNQELQLQTLNFQGQSVLNHPPLMTPPDFESQLCLPKRPQEYAKPLLHNAFLARVRENPGRIALDALSSTGRATYTYKSLDDLSSDLAEKILQIIGVDADHTDRNITVALSTSAELYIAWLGILKAGCVVSPVPTDCPSGLLQHMTGLTSSKVVLGSAETLEYFDRIIGDSSTFTFINVETIARQNYEHLLQRPPPLVNTSENDVAYILFTSGSTGKPKGVQITHHAAVCSIAANIAASPYSFESGPSSIRWFQMAAPTFDLSVLEIFVTFSIGGTICACDRTMMLTDAESVITQLEATITMTTPTLASLLRPSRIPKLREVWVCGEMLKREASELFARDRDPSVADGDTNLLNAYGPTEATITCTVDARVSLKHRGSLIGPPLPTCSNIILDSSEPPKAVPLGFAGELAIGGPQLSIGYLKSPEKTAAAFVDVEPYGKLYRTGDMARLIMGPDGTLQVEFLGRLSSDQIKILGRRVELGEIEAGLRNPLIAEVAAVALKPEVSGLPQVQLIAVVTCRTEKSDSDILAACQERAENVLQPHMRPSIYYVMDKLPRLASEKTDRKTLAKYCLSPEKSGLRRLRNGDVDGHREAGSSSIPMLQSVIEAVSSVAIVGSDKITSATTLLSLGIDSLRSVRLLQNFREIGIEGLQVTDILTCHNLGDLDTKAQQALNRSTPSLAKARNLQTLLIDFENRHKKQCLSALGFNEDNIVSFLPVTTSQAVALASFLLTADANGFQAVPGGKAFIQHTVYTVKPELNSQRIVESWTRVLSRYDIMRSVFVEVNDDLTPFAQCILSPDHEAAQIKPHFYSAKSDNECKDVIQAAQKAAEEKISLYEPPRRLSVVQSPTQTIIVFSQLHSVFDGGSETLLLEDIEREYFGQPSIERTGVLTAVERHFSENRAEAAQFWQAYMDGFLSPSFPCLRSTVPGPDENVCGGYSFMSDLSLESLTRQAAALQCSPLSILQAAWAQILFTYTGERDVAFGNTMSGRFTTELVNCSAPVLTIQSTRVNLNEENDKRNIDILLERTAQNTAALSYLHTPITGARYDTTIALQMYLNSGKGEALYERVCHPGMQNDLAVMIEVYPDRSGLLEFRLTYQTALLDDDAAYTMLANLARVTNHIMSYPNAKYMDPSVWTSLQGPGQLEQINGYHHLGQQLLHECVAEFAQKSPNAIALAFYDDLSVDHPKVQLTYADLEVKATRVAGFLMSQLPAKEGSKHVVPIFMEKCPELYITLLGILKAGAAWCPVDPSYPPARQIFLIEKTTAGICFTSKSTTSQLSSILPASFKSISVSDLLEGGSCSTSRTLKASESARLDNLSIQRSDIAYVIFTSGTTGTPKGVPISHESASLSIDSYIQRVNVDLDLRGCEVRFLQFANYTFDAFVCDVFTAWRLGGTLVSATRDILLGSFIALANKVGATHTSMTPTFASTLQPQDFETLRVATMGGEVLPQILADKWKSRMSLCNVYGPAETAINTTINRLSAASRSGNIGTALPAVNAYVMASGYPVMKHMLGELVISGPQLSPGYWDNVHSSNNRFRWNSTLQCRVYHTGDYVRQLADGSFDFVGRKDDLVKIRGMRVELTEISTVCSAGHESVVHSEVLLAKLPGSTQSSLICFVDCGLQKSSDVDNFCILKNEEAQLVAQAVKRHATAELPRHMVPDVFMPLNCLPRNQSSKVNRKRLLEVIGREWSMQPMSPVADEQVDPAWCIKHRPLLEKIQGVIKIMPTTLSRSTTLSELGVDSIGAIRLSSRLKNDGHDISAIQVLDSVTIEDLINHLSVKRQGTSNWKTLLSRYLDHWKPLVSRHLARDPAHFSLVPTTVFQDGMLVETLRDPMLYWASYSWRLPSTVDIARVRQAWQHVSKNHDILKVSFVPTAYFEQEETQSSGPSSMFIQLIDYNASMGWQEIVSDSGDWQQSIHALCANLQRTQHENNFSSPPWRVTILAQQDQRIMNLTIHHSLCDGEMLRSLMHDVAWAYSTAELPVKRCQVQEAVSRLAVRYSEPEGHKFWGDMLSPLVSQTSLGDATSNSPKAVVRKIRHRTTELQATRSTSKLTGLARRLGASSLSPLFRVTFGIMLTEYYEQQSVLFGEVRSERLLESQLVGAMAPLSATYPVPFRSSGNLKDMVHSQQILVMDSIRYGPPQPSDVRKILKKSRDEALYSAVYVLRQRSEDDGGSLAPWEEFKDIFEIFVDHEFALNVLEGADDTVTISLSVDETLMSSSAQAIFLQQLDALLIAFDKSAPEISLSGLNAHFPLDLLSIASSKVSAQYTSTVPPSHYIETWAKTHPEWKAVEVATGFLGSQKIVTEDWTYKKLNETANQVANLIIHASLHGRAIAVSLDRSLIAFAIIVGIMKSGNTYVPIEAGLPNDRKSFLLRDSRAAMAFVCDNNFDGVELPPETKVLDTKNQSFIENLSTQDTSDILNNYPENLDAYLLYTSGSTGAPKGVRVSRHNLSSFSDAWGKLIGNVAPKSLELGGVGKFLCLASRAFDVHIGEMFLAWRFGLCAVTGERLSMLDDLPRTFRELGVTHAGIVPSLLDQTGLVPEDAPHLVYLGVGGEKMTPRTQQIWSSSDRVALVNVYGPTEVTIGCSAGRILPDSDTRCIGHPLGDSVAHVLAPGSNEHVKKGMAGELVIEGSLVANGYLNRPDAKGFCDINGRKMYRTGDIVRMDADSSILFLGRKDEQVKVRGQRLELGEVSEVIRSLSPTDIDVVTLLLNHPGTSKQFLVSFVASSGAAVRGELRWINENYKEINNSLRQACEQTLPAYMVPDFIIPISFIPLRDTSAKTDAKALEHMFHTLSLGELFGESSSLVNKPTTAPSRDLTSIEKQILTVVKSVVGQDDKRDARPGSTLFQLGLDSIASVKLSFKLKKLGFSTTVARLLQNPTIEELGRMKNALKGSHHAEPSNSESITTRFEELEKETMNSLKDRETTHIESIRPCMPLQEVLVAHTMSHGSEADNAYVSHMIFELDPAVVVEHVKAAWAAVVKNTELLRTCFIDRENDIVQLVIKENHATPVWKHLSNGTNMLKEELLSCKKEIADDIVTNIDKSPPVRFTLASCDGADETNEMSLFMLSIHHALYDMVSIEMIFQDFEVAYTDSSLSRRPSTLPLLEHIAAQQQNESKAKSYWTTLFDGYDHRIEKISPRTAQTTARTLNASLTTLESLCSQTNMTLSALIQGVFAYVLARTLKRPDLIFGVVLSGRSIDVEGIDAMAAPCISTIPQRLNIGTDGETIAELITTVQDRLFKSMEYQYTSLRSLSRWLEISGPLFSSLFSFTKLSPPEDSGSSKSRILKPTEGEMFLDFELALECEADPGTDTVTLRTRSTMFDKMEELDALLEQMESLVTSFTRGENKAVDGDFGSMLHTRLLPPHGSLQEESDDWSVLEQQIRDVVVAFSGASPNEVKRTTPFIKYGIDSITTIRFSTLLRKNGFWVSGADVLRNPSVAKLATHIQTTSSFNGTAKDSDDEASESAGIGNWSKALLAGAVSTKVLDDVVAVYPLTPLQAGMISATVMMDPTLYAHHHPFRLPQGTSIDQVRSAWSRLVAKHDILRTSFHEINQPRPQLVGAVHQESILNWHEVATEDVQVAIDDLIKRTQFPSVSSFETPPVKATVIRSPEDMLLVVSLHHATYDGTSIRFIFEDLWAILRGNRVPERNPFYETAMKIHNMSSGSVGFWADSLSGYGGAAAIAEAEDIQNKMTSKTMLLAQDTSALEQWCTEKGITIQTICQLAVSKAVCAQTKSRDVVLGQVHAARLDINGADKVAGPMLNTVPLRLCIHDDSFTNHDYLRDLQAFQNKSLDHLHASLSDIQRLWRKENGRDGQLFEVLFIFRKGEDATEAPFWQPFEPEGSKESLPPSHYDLVIEVHQKSRGGLELEVHSRFADDTTSNLMSLLVESFESIRKHPDELAISSPGVLSKVPKPGLTRETGAVPTSPFDQSAIDQFLDPLRKVLSETTDTPVSSIDAQTSIFSIGVDSIVAIRVAGACRKAHIPLHTMEIMRNAKIGKLCEVAFAKSGQAAPNRSTTESNGVAPLLDQEVKKAAASKLGRAEAEIQEILPVLPGQEYHLACWLTSGKTLLEPVWVFKAENGLDAGRLRDTWISLVQKNDSLRTCFAQVKPTLAVQAILKPDCVDAAKSFTVQQVPENMTMEEYVKSEIHHLSLSPSSLYEPPVRIVLIQGGREGVSVLLRLHHALYDAWSMGILIDELSSLYCGTMQKPCPPLSVSHFAQFTQQKLRGKNEEQFWTETLGQCDPTILTPKADINTDSKSCNRAFVSFECVDVSMGALKSAARAFGITPQCLIQVAFGRMLSDVTESSSPVFGYYTAGRSAELEGIEALASPTLNMLPVAVPKDLVASQLAGTSLSILLQSFQDRTNSQSDYEQSRLRDVIKWAPNKGVSPLFNAHLNILWNDEILLKPQVSKDTLLRPWPLGVPSDYASPTPLSRGSSVDGLDTSFLPTNVLFADVGPSRETANLAIGIGCDPTLRDAQGLEEIARMFSGHLSRLVGSRDLV.

Positions 238–656 are adenylation 1; it reads ARVRENPGRI…LGRLSSDQIK (419 aa). Residues 779 to 856 form the Carrier 1 domain; sequence SSSIPMLQSV…DLDTKAQQAL (78 aa). Serine 816 carries the O-(pantetheine 4'-phosphoryl)serine modification. Residues 925-1175 are condensation 1; sequence PGGKAFIQHT…AFGNTMSGRF (251 aa). The interval 1349 to 1760 is adenylation 2; that stretch reads EFAQKSPNAI…GRKDDLVKIR (412 aa). A Carrier 2 domain is found at 1889–1965; sequence PAWCIKHRPL…DLINHLSVKR (77 aa). Serine 1926 is modified (O-(pantetheine 4'-phosphoryl)serine). A condensation 2 region spans residues 2001 to 2285; the sequence is PTTVFQDGML…SERLLESQLV (285 aa). Positions 2464-2869 are adenylation 3; it reads TWAKTHPEWK…GRKDEQVKVR (406 aa). In terms of domain architecture, Carrier 3 spans 3002-3079; it reads RDLTSIEKQI…ELGRMKNALK (78 aa). An O-(pantetheine 4'-phosphoryl)serine modification is found at serine 3040. Positions 3121–3530 are condensation 3; the sequence is CMPLQEVLVA…QMESLVTSFT (410 aa). The Carrier 4 domain maps to 3564-3637; that stretch reads SVLEQQIRDV…KLATHIQTTS (74 aa). O-(pantetheine 4'-phosphoryl)serine is present on serine 3598. Residues 3679 to 4087 are condensation 4; it reads VYPLTPLQAG…FESIRKHPDE (409 aa). The 77-residue stretch at 4119–4195 folds into the Carrier 5 domain; it reads SAIDQFLDPL…KLCEVAFAKS (77 aa). Serine 4156 is subject to O-(pantetheine 4'-phosphoryl)serine. The tract at residues 4262–4589 is condensation 5; sequence WVFKAENGLD…FNAHLNILWN (328 aa).

The protein belongs to the NRP synthetase family.

The protein operates within siderophore biosynthesis. Nonribosomal peptide synthetase required for the biosynthetis of epichloenin A, an extracellular siderophore that plays a crucial role in endophyte-grass symbioses. SidN assembles epichloenin A by activating and incorporating three trans-anhydromevalonylhydroxyornithine (trans-AMHO), 1 glutamine and 4 glycine moieties. Trans-AMHO is produced from L-ornithine via 2 steps involving a L-ornithine N(5)-monooxygenase and an AHMO-N(5)-transacylase that have still to be identified. The third adenylation domain (A3) of sidN incorporates the hydroxamate groups of the siderophore which forms an octahedral iron complex. The other component amino acids are assembled by sidN adenylation domains A1 and A2. This chain is Nonribosomal peptide synthetase sidN, found in Epichloe festucae (strain E2368).